Here is a 267-residue protein sequence, read N- to C-terminus: Dihydropteroate synthase (267 aa).

In terms of domain architecture, Pterin-binding spans M1–K251. N11 is a Mg(2+) binding site. (7,8-dihydropterin-6-yl)methyl diphosphate is bound by residues T51, D84, N103, D167, K203, and R239–H241.

This sequence belongs to the DHPS family. Homodimer. The cofactor is Mg(2+).

It catalyses the reaction (7,8-dihydropterin-6-yl)methyl diphosphate + 4-aminobenzoate = 7,8-dihydropteroate + diphosphate. The protein operates within cofactor biosynthesis; tetrahydrofolate biosynthesis; 7,8-dihydrofolate from 2-amino-4-hydroxy-6-hydroxymethyl-7,8-dihydropteridine diphosphate and 4-aminobenzoate: step 1/2. Catalyzes the condensation of para-aminobenzoate (pABA) with 6-hydroxymethyl-7,8-dihydropterin diphosphate (DHPt-PP) to form 7,8-dihydropteroate (H2Pte), the immediate precursor of folate derivatives. The protein is Dihydropteroate synthase (folP) of Staphylococcus aureus (strain MSSA476).